A 256-amino-acid chain; its full sequence is MILCIDVGNSHIYGGVFDGDEIKLRFRHTSKVSTSDELGIFLKSVLRENNCSPETIRKIAICSVVPQVDYSLRSACVKYFSIDPFLLQAGVKTGLNIKYRNPVEVGADRIANAIAATHSFPNQNIIVIDFGTATTFCAISHKKAYLGGAILPGLRLSADALSKNTAKLPSVEIIKTESVVGRSTIESIQSGVYYGVLGACKELIQRIHHEAFNGDQILILATGGFASLFDKQGLYDHLVPDLVLQGIRLAAMMNTA.

6–13 (DVGNSHIY) contributes to the ATP binding site. Substrate-binding positions include Tyr99 and 106-109 (GADR). The active-site Proton acceptor is Asp108. K(+) is bound at residue Asp129. Thr132 is an ATP binding site. A substrate-binding site is contributed by Thr184.

It belongs to the type III pantothenate kinase family. In terms of assembly, homodimer. Requires NH4(+) as cofactor. It depends on K(+) as a cofactor.

It localises to the cytoplasm. The catalysed reaction is (R)-pantothenate + ATP = (R)-4'-phosphopantothenate + ADP + H(+). It participates in cofactor biosynthesis; coenzyme A biosynthesis; CoA from (R)-pantothenate: step 1/5. Catalyzes the phosphorylation of pantothenate (Pan), the first step in CoA biosynthesis. The protein is Type III pantothenate kinase of Legionella pneumophila (strain Paris).